The following is a 184-amino-acid chain: Cysteine proteinase inhibitor 3 (184 aa).

A signal peptide spans 1–35 (MLRRRGFCCCSGAPAAAAAALLLLAVAAAAPRAAG). The region spanning 48–134 (GMLAAIRREQ…KAVVEFRHVG (87 aa)) is the Cystatin domain. A Secondary area of contact motif is present at residues 90–94 (QVVTG). Residues 138–165 (SQSATAADDNAGQDTADPTVASRNDLHN) form a disordered region.

Belongs to the cystatin family. Phytocystatin subfamily.

It is found in the secreted. In terms of biological role, specific inhibitor of cysteine proteinases. Probably involved in the regulation of endogenous processes and in defense against pests and pathogens. This Oryza sativa subsp. japonica (Rice) protein is Cysteine proteinase inhibitor 3.